Reading from the N-terminus, the 424-residue chain is Glucan endo-1,3-alpha-glucosidase agn1 (424 aa).

The first 20 residues, 1–20 (MKLVLFLVLLFSALINLTNA), serve as a signal peptide directing secretion.

It belongs to the glycosyl hydrolase 71 family. Monomer. In terms of processing, not glycosylated.

It localises to the secreted. Its subcellular location is the cell wall. The enzyme catalyses Endohydrolysis of (1-&gt;3)-alpha-D-glucosidic linkages in isolichenin, pseudonigeran and nigeran.. Its function is as follows. Has a role in cell separation where it is required for the degradation of the cell wall material surrounding the septum (the septum edging) which must be hydrolyzed before full separation of the daughter cells can occur. Hydrolyzes 1,3-alpha-glucan predominantly into pentasaccharides. This Schizosaccharomyces pombe (strain 972 / ATCC 24843) (Fission yeast) protein is Glucan endo-1,3-alpha-glucosidase agn1 (agn1).